A 624-amino-acid polypeptide reads, in one-letter code: NADPH-dependent diflavin oxidoreductase 1 (624 aa).

A Flavodoxin-like domain is found at 6 to 168; sequence IVILYGSETG…VYYEFEKRII (163 aa). Residues 12–17, 59–62, 106–115, and glutamate 142 each bind FMN; these read SETGNA, STTG, and LGDSSYPRFN. Positions 226–474 constitute an FAD-binding FR-type domain; the sequence is ETIRHGTVKK…LQNNHLLHED (249 aa). FAD contacts are provided by residues arginine 384, 414–417, and 446–449; these read RFYS and GLCT. NADP(+) is bound by residues 539–540 and 548–552; these read SR and AKYVQ. Tryptophan 624 is a binding site for FAD.

It belongs to the NADPH-dependent diflavin oxidoreductase NDOR1 family. This sequence in the N-terminal section; belongs to the flavodoxin family. The protein in the C-terminal section; belongs to the flavoprotein pyridine nucleotide cytochrome reductase family. In terms of assembly, interacts with DRE2; as part of the cytosolic iron-sulfur (Fe-S) protein assembly (CIA) machinery. FAD serves as cofactor. It depends on FMN as a cofactor.

It is found in the cytoplasm. It localises to the mitochondrion. The enzyme catalyses 2 oxidized [2Fe-2S]-[protein] + NADPH = 2 reduced [2Fe-2S]-[protein] + NADP(+) + H(+). NADPH-dependent reductase which is a central component of the cytosolic iron-sulfur (Fe-S) protein assembly (CIA) machinery. Transfers electrons from NADPH via its FAD and FMN prosthetic groups to the [2Fe-2S] cluster of DRE2, another key component of the CIA machinery. In turn, this reduced cluster provides electrons for assembly of cytosolic iron-sulfur cluster proteins. Positively controls H(2)O(2)-induced cell death. This Kluyveromyces lactis (strain ATCC 8585 / CBS 2359 / DSM 70799 / NBRC 1267 / NRRL Y-1140 / WM37) (Yeast) protein is NADPH-dependent diflavin oxidoreductase 1.